An 81-amino-acid polypeptide reads, in one-letter code: Photosystem I iron-sulfur center (81 aa).

4Fe-4S ferredoxin-type domains are found at residues 2–31 (SHSVKIYDTCIGCTQCVRACPTDVLEMIPW) and 39–68 (IASAPRTEDCVGCKRCESACPTDFLSVRVY). The [4Fe-4S] cluster site is built by C11, C14, C17, C21, C48, C51, C54, and C58.

The eukaryotic PSI reaction center is composed of at least 11 subunits. [4Fe-4S] cluster serves as cofactor.

The protein resides in the plastid. It localises to the chloroplast thylakoid membrane. The enzyme catalyses reduced [plastocyanin] + hnu + oxidized [2Fe-2S]-[ferredoxin] = oxidized [plastocyanin] + reduced [2Fe-2S]-[ferredoxin]. Its function is as follows. Apoprotein for the two 4Fe-4S centers FA and FB of photosystem I (PSI); essential for photochemical activity. FB is the terminal electron acceptor of PSI, donating electrons to ferredoxin. The C-terminus interacts with PsaA/B/D and helps assemble the protein into the PSI complex. Required for binding of PsaD and PsaE to PSI. PSI is a plastocyanin-ferredoxin oxidoreductase, converting photonic excitation into a charge separation, which transfers an electron from the donor P700 chlorophyll pair to the spectroscopically characterized acceptors A0, A1, FX, FA and FB in turn. The sequence is that of Photosystem I iron-sulfur center from Spinacia oleracea (Spinach).